A 666-amino-acid chain; its full sequence is DNA mismatch repair protein MutL (666 aa).

It belongs to the DNA mismatch repair MutL/HexB family.

This protein is involved in the repair of mismatches in DNA. It is required for dam-dependent methyl-directed DNA mismatch repair. May act as a 'molecular matchmaker', a protein that promotes the formation of a stable complex between two or more DNA-binding proteins in an ATP-dependent manner without itself being part of a final effector complex. The protein is DNA mismatch repair protein MutL of Clostridium botulinum (strain Loch Maree / Type A3).